The chain runs to 185 residues: HTH-type transcriptional regulator SA2364 (185 aa).

The 61-residue stretch at 6 to 66 (KENRQRIEEI…YVIQRDLDIF (61 aa)) folds into the HTH tetR-type domain. The segment at residues 29 to 48 (SMNRIAKELGIGMGTLYRHF) is a DNA-binding region (H-T-H motif).

The polypeptide is HTH-type transcriptional regulator SA2364 (Staphylococcus aureus (strain N315)).